The primary structure comprises 230 residues: 5'-methylthioadenosine/S-adenosylhomocysteine nucleosidase (230 aa).

E12 acts as the Proton acceptor in catalysis. Substrate-binding positions include G78, I153, and 174-175 (ME). The active-site Proton donor is D198.

Belongs to the PNP/UDP phosphorylase family. MtnN subfamily.

The catalysed reaction is S-adenosyl-L-homocysteine + H2O = S-(5-deoxy-D-ribos-5-yl)-L-homocysteine + adenine. It catalyses the reaction S-methyl-5'-thioadenosine + H2O = 5-(methylsulfanyl)-D-ribose + adenine. It carries out the reaction 5'-deoxyadenosine + H2O = 5-deoxy-D-ribose + adenine. It functions in the pathway amino-acid biosynthesis; L-methionine biosynthesis via salvage pathway; S-methyl-5-thio-alpha-D-ribose 1-phosphate from S-methyl-5'-thioadenosine (hydrolase route): step 1/2. Its function is as follows. Catalyzes the irreversible cleavage of the glycosidic bond in both 5'-methylthioadenosine (MTA) and S-adenosylhomocysteine (SAH/AdoHcy) to adenine and the corresponding thioribose, 5'-methylthioribose and S-ribosylhomocysteine, respectively. Also cleaves 5'-deoxyadenosine, a toxic by-product of radical S-adenosylmethionine (SAM) enzymes, into 5-deoxyribose and adenine. The chain is 5'-methylthioadenosine/S-adenosylhomocysteine nucleosidase from Shewanella piezotolerans (strain WP3 / JCM 13877).